An 844-amino-acid polypeptide reads, in one-letter code: DNA mismatch repair protein MutS (844 aa).

Glycine 610 to serine 617 lines the ATP pocket.

Belongs to the DNA mismatch repair MutS family.

This protein is involved in the repair of mismatches in DNA. It is possible that it carries out the mismatch recognition step. This protein has a weak ATPase activity. This is DNA mismatch repair protein MutS from Francisella tularensis subsp. holarctica (strain FTNF002-00 / FTA).